A 213-amino-acid chain; its full sequence is Large ribosomal subunit protein uL3 (213 aa).

Gln151 is modified (N5-methylglutamine).

Belongs to the universal ribosomal protein uL3 family. Part of the 50S ribosomal subunit. Forms a cluster with proteins L14 and L19. In terms of processing, methylated by PrmB.

In terms of biological role, one of the primary rRNA binding proteins, it binds directly near the 3'-end of the 23S rRNA, where it nucleates assembly of the 50S subunit. The protein is Large ribosomal subunit protein uL3 of Rhizobium etli (strain CIAT 652).